The chain runs to 213 residues: MGGTFDPIHNGHLVAASEVADLFDLDEVVFVPTGEPWQKHHRRVSAAEDRYLMTVIATASNPRFSVSRVDIDRGGPTYTKDTLRDLRDLNTDADLYFITGADALGSILSWQNWEDMFSMAKFVGVSRPGYELDGKHILDAMRELPPDALSLVEVPALAISSSDCRKRAEEQRPIWYLVPDGVVQYVAKRGLYTRKPNNGEAKDGDVKDEEAVR.

The segment at 194–213 is disordered; it reads RKPNNGEAKDGDVKDEEAVR. The segment covering 200–213 has biased composition (basic and acidic residues); it reads EAKDGDVKDEEAVR.

Belongs to the NadD family.

It catalyses the reaction nicotinate beta-D-ribonucleotide + ATP + H(+) = deamido-NAD(+) + diphosphate. The protein operates within cofactor biosynthesis; NAD(+) biosynthesis; deamido-NAD(+) from nicotinate D-ribonucleotide: step 1/1. Functionally, catalyzes the reversible adenylation of nicotinate mononucleotide (NaMN) to nicotinic acid adenine dinucleotide (NaAD). The polypeptide is Probable nicotinate-nucleotide adenylyltransferase (Mycolicibacterium smegmatis (strain ATCC 700084 / mc(2)155) (Mycobacterium smegmatis)).